A 217-amino-acid chain; its full sequence is Ribosomal RNA small subunit methyltransferase G (217 aa).

S-adenosyl-L-methionine contacts are provided by residues glycine 85, leucine 90, 135–136 (IE), and arginine 149.

The protein belongs to the methyltransferase superfamily. RNA methyltransferase RsmG family.

The protein resides in the cytoplasm. The catalysed reaction is guanosine(527) in 16S rRNA + S-adenosyl-L-methionine = N(7)-methylguanosine(527) in 16S rRNA + S-adenosyl-L-homocysteine. Specifically methylates the N7 position of guanine in position 527 of 16S rRNA. The sequence is that of Ribosomal RNA small subunit methyltransferase G from Acidiphilium cryptum (strain JF-5).